The primary structure comprises 252 residues: tRNA1(Val) (adenine(37)-N6)-methyltransferase (252 aa).

This sequence belongs to the methyltransferase superfamily. tRNA (adenine-N(6)-)-methyltransferase family.

It localises to the cytoplasm. It carries out the reaction adenosine(37) in tRNA1(Val) + S-adenosyl-L-methionine = N(6)-methyladenosine(37) in tRNA1(Val) + S-adenosyl-L-homocysteine + H(+). In terms of biological role, specifically methylates the adenine in position 37 of tRNA(1)(Val) (anticodon cmo5UAC). This is tRNA1(Val) (adenine(37)-N6)-methyltransferase from Yersinia pseudotuberculosis serotype O:3 (strain YPIII).